Reading from the N-terminus, the 424-residue chain is Dihydroorotase (424 aa).

Zn(2+) contacts are provided by His-58 and His-60. Substrate is bound by residues His-60–Arg-62 and Asn-92. Positions 150, 177, and 230 each coordinate Zn(2+). Substrate is bound at residue Asn-276. Asp-303 is a Zn(2+) binding site. Residue Asp-303 is part of the active site. Residues His-307 and Phe-321 to Gly-322 contribute to the substrate site.

Belongs to the metallo-dependent hydrolases superfamily. DHOase family. Class I DHOase subfamily. The cofactor is Zn(2+).

It catalyses the reaction (S)-dihydroorotate + H2O = N-carbamoyl-L-aspartate + H(+). Its pathway is pyrimidine metabolism; UMP biosynthesis via de novo pathway; (S)-dihydroorotate from bicarbonate: step 3/3. In terms of biological role, catalyzes the reversible cyclization of carbamoyl aspartate to dihydroorotate. The sequence is that of Dihydroorotase from Staphylococcus aureus (strain MRSA252).